Reading from the N-terminus, the 121-residue chain is Large ribosomal subunit protein uL14 (121 aa).

Belongs to the universal ribosomal protein uL14 family. Part of the 50S ribosomal subunit. Forms a cluster with proteins L3 and L19. In the 70S ribosome, L14 and L19 interact and together make contacts with the 16S rRNA in bridges B5 and B8.

Functionally, binds to 23S rRNA. Forms part of two intersubunit bridges in the 70S ribosome. The chain is Large ribosomal subunit protein uL14 from Akkermansia muciniphila (strain ATCC BAA-835 / DSM 22959 / JCM 33894 / BCRC 81048 / CCUG 64013 / CIP 107961 / Muc).